We begin with the raw amino-acid sequence, 167 residues long: Transmembrane protein 220 (167 aa).

Helical transmembrane passes span P10–V30, W40–V60, V69–L89, E104–S122, and M130–H150.

The protein resides in the membrane. The protein is Transmembrane protein 220 (Tmem220) of Mus musculus (Mouse).